We begin with the raw amino-acid sequence, 452 residues long: Pre-mRNA-splicing factor prp46 (452 aa).

Over residues A61–A70 the composition is skewed to low complexity. A disordered region spans residues A61 to W129. Positions S114–Q125 are enriched in polar residues. WD repeat units follow at residues G141 to T180, G183 to H222, G225 to V264, G267 to T308, H310 to E349, G350 to T388, and E399 to T438. A disordered region spans residues D432–Y452.

Belongs to the WD repeat PRL1/PRL2 family. Associated with the spliceosome.

Its subcellular location is the cytoplasm. It localises to the nucleus. In terms of biological role, involved in pre-mRNA splicing and required for cell cycle progression at G2/M. The protein is Pre-mRNA-splicing factor prp46 (prp46) of Emericella nidulans (strain FGSC A4 / ATCC 38163 / CBS 112.46 / NRRL 194 / M139) (Aspergillus nidulans).